The following is a 263-amino-acid chain: Chaperone protein ClpE (263 aa).

Positions 1-34 are cleaved as a signal peptide; that stretch reads MSKRNAVTTFFTNRVTKALGMTLALMMTCQSAMA. A compositionally biased stretch (polar residues) spans 238-255; it reads QKKTPTSSGQKASDSLVN. Residues 238–263 are disordered; that stretch reads QKKTPTSSGQKASDSLVNPSDKADKK.

This sequence belongs to the periplasmic pilus chaperone family.

The protein localises to the periplasm. Its function is as follows. Involved in the biogenesis of the CS31A capsule-like antigen. The protein is Chaperone protein ClpE (clpE) of Escherichia coli.